The sequence spans 178 residues: Histone H3-like centromeric protein CENH3 (178 aa).

Positions 1–81 (MARTKHRVTR…GSQKKSYRYR (81 aa)) are disordered. The residue at position 5 (K5) is an N6,N6,N6-trimethyllysine; alternate. K5 bears the N6,N6-dimethyllysine; alternate mark. The residue at position 5 (K5) is an N6-methyllysine; alternate. S11 bears the Phosphoserine mark. The span at 16-36 (QTDAAGASSSQAAGPTTTPTR) shows a compositional bias: low complexity. Polar residues predominate over residues 43–56 (DNTQQTNPTTSPAT). K63 and K75 each carry N6-methyllysine; alternate. K63 is modified (N6-acetyllysine; alternate). At K75 the chain carries N6,N6,N6-trimethyllysine; alternate. An N6,N6-dimethyllysine; alternate modification is found at K75.

This sequence belongs to the histone H3 family. In terms of assembly, forms a nucleosome-like histone octamer containing two molecules each of H2A, H2B, CENH3 and H4 assembled in one CENH3-H4 heterotetramer and two H2A-H2B heterodimers. Interacts with ORTH2.

The protein resides in the chromosome. Its subcellular location is the centromere. The protein localises to the kinetochore. Functionally, histone H3-like variant which exclusively replaces conventional H3 in the nucleosome core of centromeric chromatin at the inner plate of the kinetochore. Required for recruitment and assembly of kinetochore proteins, mitotic progression and chromosome segregation. May serve as an epigenetic mark that propagates centromere identity through replication and cell division. In Arabidopsis thaliana (Mouse-ear cress), this protein is Histone H3-like centromeric protein CENH3.